A 413-amino-acid polypeptide reads, in one-letter code: Protein MANNAN SYNTHESIS-RELATED (413 aa).

At 1–5 (MNSME) the chain is on the cytoplasmic side. A helical; Signal-anchor for type II membrane protein transmembrane segment spans residues 6 to 26 (IRQAFAGLLTLSMFIMLGNMI). At 27–413 (KKDHFDYPAE…KNHLAYKCFC (387 aa)) the chain is on the lumenal side. N207 carries N-linked (GlcNAc...) asparagine glycosylation. Position 255–257 (255–257 (DLR)) interacts with substrate.

Belongs to the glycosyltransferase GT106 family. As to expression, highly and specifically expressed in the endosperm.

Its subcellular location is the golgi apparatus membrane. It functions in the pathway glycan biosynthesis. In terms of biological role, glycosyltransferase involved in mannan biosynthesis. This Trigonella foenum-graecum (Fenugreek) protein is Protein MANNAN SYNTHESIS-RELATED.